A 247-amino-acid chain; its full sequence is Ferredoxin:CoB-CoM heterodisulfide reductase subunit C (247 aa).

In terms of domain architecture, 4Fe-4S ferredoxin-type spans Thr32–Arg62. 8 residues coordinate [4Fe-4S] cluster: Cys41, Cys44, Cys47, Cys51, Cys84, Cys87, Cys90, and Cys94. Basic and acidic residues predominate over residues Arg216–Thr240. The interval Arg216 to Val247 is disordered.

Belongs to the HdrC family. In terms of assembly, the ferredoxin:CoB-CoM heterodisulfide reductase is composed of three subunits; HdrA1, HdrB1 and HdrC1. The cofactor is [4Fe-4S] cluster.

The protein localises to the cytoplasm. It carries out the reaction coenzyme B + coenzyme M + 2 oxidized [2Fe-2S]-[ferredoxin] = coenzyme M-coenzyme B heterodisulfide + 2 reduced [2Fe-2S]-[ferredoxin] + 2 H(+). It functions in the pathway cofactor metabolism; coenzyme M-coenzyme B heterodisulfide reduction; coenzyme B and coenzyme M from coenzyme M-coenzyme B heterodisulfide: step 1/1. In terms of biological role, part of a complex that catalyzes the reversible reduction of CoM-S-S-CoB to the thiol-coenzymes H-S-CoM (coenzyme M) and H-S-CoB (coenzyme B). Probably involved in methylotrophic methanogenesis but not in aceticlastic methanogenesis. The chain is Ferredoxin:CoB-CoM heterodisulfide reductase subunit C from Methanosarcina acetivorans (strain ATCC 35395 / DSM 2834 / JCM 12185 / C2A).